Consider the following 474-residue polypeptide: Aspartate ammonia-lyase (474 aa).

5 residues coordinate L-aspartate: threonine 105, serine 144, threonine 145, asparagine 146, and threonine 191. Residues 322–331 (GSSIMPGKVN) are SS loop. The Proton acceptor role is filled by serine 323. The L-aspartate site is built by serine 324 and lysine 329.

The protein belongs to the class-II fumarase/aspartase family. Aspartase subfamily. Homotetramer.

It catalyses the reaction L-aspartate = fumarate + NH4(+). The catalysed reaction is L-phenylalanine = (E)-cinnamate + NH4(+). Does not require any divalent metal ion for activation of catalysis, but the activity is slightly increased in the presence of Mg(2+), Mn(2+), Ca(2+) or Co(2+). Functionally, catalyzes the reversible conversion of L-aspartate to fumarate and ammonia. Can also utilize L-phenylalanine to form cinnamic acid. Exhibits the highest specific activity towards L-phenylalanine, but catalytic efficiency is 3-fold higher with L-aspartate. The polypeptide is Aspartate ammonia-lyase (Pseudomonas aeruginosa (strain ATCC 15692 / DSM 22644 / CIP 104116 / JCM 14847 / LMG 12228 / 1C / PRS 101 / PAO1)).